A 256-amino-acid chain; its full sequence is ATP synthase peripheral stalk subunit b, mitochondrial (256 aa).

Residues 1–42 (MLSRVVLSAAATAAPCLKNAAALGPGVLQATRAFHTGQPRLA) constitute a mitochondrion transit peptide. At lysine 131 the chain carries N6-succinyllysine. N6-acetyllysine occurs at positions 139, 154, 162, 221, 225, 233, and 244.

This sequence belongs to the eukaryotic ATPase B chain family. In terms of assembly, component of the ATP synthase complex composed at least of ATP5F1A/subunit alpha, ATP5F1B/subunit beta, ATP5MC1/subunit c (homooctomer), MT-ATP6/subunit a, MT-ATP8/subunit 8, ATP5ME/subunit e, ATP5MF/subunit f, ATP5MG/subunit g, ATP5MK/subunit k, ATP5MJ/subunit j, ATP5F1C/subunit gamma, ATP5F1D/subunit delta, ATP5F1E/subunit epsilon, ATP5PF/subunit F6, ATP5PB/subunit b, ATP5PD/subunit d, ATP5PO/subunit OSCP. ATP synthase complex consists of a soluble F(1) head domain (subunits alpha(3) and beta(3)) - the catalytic core - and a membrane F(0) domain - the membrane proton channel (subunits c, a, 8, e, f, g, k and j). These two domains are linked by a central stalk (subunits gamma, delta, and epsilon) rotating inside the F1 region and a stationary peripheral stalk (subunits F6, b, d, and OSCP).

It is found in the mitochondrion. It localises to the mitochondrion inner membrane. In terms of biological role, subunit b, of the mitochondrial membrane ATP synthase complex (F(1)F(0) ATP synthase or Complex V) that produces ATP from ADP in the presence of a proton gradient across the membrane which is generated by electron transport complexes of the respiratory chain. ATP synthase complex consist of a soluble F(1) head domain - the catalytic core - and a membrane F(1) domain - the membrane proton channel. These two domains are linked by a central stalk rotating inside the F(1) region and a stationary peripheral stalk. During catalysis, ATP synthesis in the catalytic domain of F(1) is coupled via a rotary mechanism of the central stalk subunits to proton translocation. In vivo, can only synthesize ATP although its ATP hydrolase activity can be activated artificially in vitro. Part of the complex F(0) domain. Part of the complex F(0) domain and the peripheric stalk, which acts as a stator to hold the catalytic alpha(3)beta(3) subcomplex and subunit a/ATP6 static relative to the rotary elements. This is ATP synthase peripheral stalk subunit b, mitochondrial from Mus musculus (Mouse).